Consider the following 173-residue polypeptide: 16S rRNA aminocarboxypropyltransferase (173 aa).

S-adenosyl-L-methionine-binding residues include threonine 25, leucine 72, leucine 96, and serine 115.

Belongs to the TDD superfamily. TSR3 family.

Its subcellular location is the cytoplasm. It carries out the reaction an N(1)-methylpseudouridine in rRNA + S-adenosyl-L-methionine = N(1)-methyl-N(3)-[(3S)-3-amino-3-carboxypropyl]pseudouridine in rRNA + S-methyl-5'-thioadenosine + H(+). Functionally, aminocarboxypropyltransferase that catalyzes the aminocarboxypropyl transfer on pseudouridine corresponding to position 914 in M.jannaschii 16S rRNA. It constitutes the last step in biosynthesis of the hypermodified N1-methyl-N3-(3-amino-3-carboxypropyl) pseudouridine (m1acp3-Psi). The polypeptide is 16S rRNA aminocarboxypropyltransferase (Methanococcoides burtonii (strain DSM 6242 / NBRC 107633 / OCM 468 / ACE-M)).